Here is a 490-residue protein sequence, read N- to C-terminus: Bifunctional protein GlmU (490 aa).

The interval 1-241 is pyrophosphorylase; that stretch reads MSSPGDTAVL…SALVAGVNNR (241 aa). UDP-N-acetyl-alpha-D-glucosamine-binding positions include 12-15, Lys-26, Gln-83, 88-89, 112-114, Gly-151, Glu-166, Asn-181, and Asn-239; these read LAAG, GT, and SGD. Asp-114 serves as a coordination point for Mg(2+). Position 239 (Asn-239) interacts with Mg(2+). A linker region spans residues 242–262; the sequence is VQLAQLGAELNRRIVAAHQLA. The interval 263 to 490 is N-acetyltransferase; that stretch reads GVTVVDPATT…AGGRPAGEAE (228 aa). Arg-344 and Lys-362 together coordinate UDP-N-acetyl-alpha-D-glucosamine. Residue His-374 is the Proton acceptor of the active site. UDP-N-acetyl-alpha-D-glucosamine is bound by residues Tyr-377 and Asn-388. Acetyl-CoA contacts are provided by residues Ala-391, 397-398, Ser-416, and Ala-434; that span reads NY. Residues 462-490 form a disordered region; that stretch reads RRKRPGSAAARAAEAAEKAAGGRPAGEAE. A compositionally biased stretch (low complexity) spans 467-490; sequence GSAAARAAEAAEKAAGGRPAGEAE.

This sequence in the N-terminal section; belongs to the N-acetylglucosamine-1-phosphate uridyltransferase family. It in the C-terminal section; belongs to the transferase hexapeptide repeat family. As to quaternary structure, homotrimer. The cofactor is Mg(2+).

The protein resides in the cytoplasm. The catalysed reaction is alpha-D-glucosamine 1-phosphate + acetyl-CoA = N-acetyl-alpha-D-glucosamine 1-phosphate + CoA + H(+). The enzyme catalyses N-acetyl-alpha-D-glucosamine 1-phosphate + UTP + H(+) = UDP-N-acetyl-alpha-D-glucosamine + diphosphate. It participates in nucleotide-sugar biosynthesis; UDP-N-acetyl-alpha-D-glucosamine biosynthesis; N-acetyl-alpha-D-glucosamine 1-phosphate from alpha-D-glucosamine 6-phosphate (route II): step 2/2. The protein operates within nucleotide-sugar biosynthesis; UDP-N-acetyl-alpha-D-glucosamine biosynthesis; UDP-N-acetyl-alpha-D-glucosamine from N-acetyl-alpha-D-glucosamine 1-phosphate: step 1/1. It functions in the pathway bacterial outer membrane biogenesis; LPS lipid A biosynthesis. In terms of biological role, catalyzes the last two sequential reactions in the de novo biosynthetic pathway for UDP-N-acetylglucosamine (UDP-GlcNAc). The C-terminal domain catalyzes the transfer of acetyl group from acetyl coenzyme A to glucosamine-1-phosphate (GlcN-1-P) to produce N-acetylglucosamine-1-phosphate (GlcNAc-1-P), which is converted into UDP-GlcNAc by the transfer of uridine 5-monophosphate (from uridine 5-triphosphate), a reaction catalyzed by the N-terminal domain. The protein is Bifunctional protein GlmU of Mycobacterium avium (strain 104).